The following is a 429-amino-acid chain: Glutamate-1-semialdehyde 2,1-aminomutase 2 (429 aa).

Position 268 is an N6-(pyridoxal phosphate)lysine (Lys-268).

It belongs to the class-III pyridoxal-phosphate-dependent aminotransferase family. HemL subfamily. Homodimer. Pyridoxal 5'-phosphate is required as a cofactor.

The protein resides in the cytoplasm. It catalyses the reaction (S)-4-amino-5-oxopentanoate = 5-aminolevulinate. It participates in porphyrin-containing compound metabolism; protoporphyrin-IX biosynthesis; 5-aminolevulinate from L-glutamyl-tRNA(Glu): step 2/2. The polypeptide is Glutamate-1-semialdehyde 2,1-aminomutase 2 (Bacillus thuringiensis (strain Al Hakam)).